Reading from the N-terminus, the 810-residue chain is MPMDVILVLWFCVCTARTVLGFGMDPDLQLDIISELDLVNTTLGVTQVAGLHNASKAFLFQDVQREIHSAPHVSEKLIQLFRNKSEFTFLATVQQKPSTSGVILSIRELEHSYFELESSGPREEIRYHYIHGGKPRTEALPYRMADGQWHKVALSVSASHLLLHIDCNRIYERVIDPPETNLPPGSNLWLGQRNQKHGFFKGIIQDGKIIFMPNGFITQCPNLNRTCPTCSDFLSLVQGIMDLQELLAKMTAKLNYAETRLGQLENCHCEKTCQVSGLLYRDQDSWVDGDNCRNCTCKSGAVECRRMSCPPLNCSPDSLPVHISGQCCKVCRPKCIYGGKVLAEGQRILTKTCRECRGGVLVKITEACPPLNCSAKDHILPENQCCRVCPGHNFCAEAPKCGENSECKNWNTKATCECKNGYISVQGNSAYCEDIDECAAKMHYCHANTVCVNLPGLYRCDCVPGYIRVDDFSCTEHDDCGSGQHNCDKNAICTNTVQGHSCTCQPGYVGNGTICKAFCEEGCRYGGTCVAPNKCVCPSGFTGSHCEKDIDECAEGFVECHNHSRCVNLPGWYHCECRSGFHDDGTYSLSGESCIDIDECALRTHTCWNDSACINLAGGFDCLCPSGPSCSGDCPHEGGLKHNGQVWILREDRCSVCSCKDGKIFCRRTACDCQNPNVDLFCCPECDTRVTSQCLDQSGQKLYRSGDNWTHSCQQCRCLEGEADCWPLACPSLGCEYTAMFEGECCPRCVSDPCLADNIAYDIRKTCLDSFGVSRLSGAVWTMAGSPCTTCKCKNGRVCCSVDLECIENN.

Residues 1–21 (MPMDVILVLWFCVCTARTVLG) form the signal peptide. Residues asparagine 40, asparagine 53, asparagine 83, asparagine 224, asparagine 294, and asparagine 372 are each glycosylated (N-linked (GlcNAc...) asparagine). The 171-residue stretch at 57–227 (AFLFQDVQRE…TQCPNLNRTC (171 aa)) folds into the Laminin G-like domain. A VWFC 1 domain is found at 271 to 332 (KTCQVSGLLY…ISGQCCKVCR (62 aa)). 3 disulfide bridges follow: cysteine 395/cysteine 407, cysteine 401/cysteine 416, and cysteine 418/cysteine 432. 3 residues coordinate Ca(2+): aspartate 434, isoleucine 435, and glutamate 437. The EGF-like 1; calcium-binding domain occupies 434 to 475 (DIDECAAKMHYCHANTVCVNLPGLYRCDCVPGYIRVDDFSCT). 15 disulfide bridges follow: cysteine 438/cysteine 451, cysteine 445/cysteine 460, cysteine 462/cysteine 474, cysteine 480/cysteine 493, cysteine 487/cysteine 502, cysteine 504/cysteine 515, cysteine 519/cysteine 529, cysteine 523/cysteine 535, cysteine 537/cysteine 546, cysteine 553/cysteine 566, cysteine 560/cysteine 575, cysteine 577/cysteine 594, cysteine 600/cysteine 613, cysteine 607/cysteine 622, and cysteine 624/cysteine 630. Ca(2+)-binding residues include asparagine 453, leucine 454, and leucine 457. In terms of domain architecture, EGF-like 2; calcium-binding spans 476–516 (EHDDCGSGQHNCDKNAICTNTVQGHSCTCQPGYVGNGTICK). Asparagine 511 carries N-linked (GlcNAc...) asparagine glycosylation. In terms of domain architecture, EGF-like 3 spans 517–547 (AFCEEGCRYGGTCVAPNKCVCPSGFTGSHCE). Residues 549–587 (DIDECAEGFVECHNHSRCVNLPGWYHCECRSGFHDDGTY) enclose the EGF-like 4; calcium-binding domain. Asparagine 562 is a glycosylation site (N-linked (GlcNAc...) asparagine). Residues 596-631 (DIDECALRTHTCWNDSACINLAGGFDCLCPSGPSCS) enclose the EGF-like 5; calcium-binding domain. Asparagine 609 is a glycosylation site (N-linked (GlcNAc...) asparagine). VWFC domains follow at residues 632 to 687 (GDCP…PECD) and 692 to 750 (SQCL…PRCV). The N-linked (GlcNAc...) asparagine glycan is linked to asparagine 708.

As to quaternary structure, interacts with ATRAID; the interaction promotes osteoblast cell differentiation and mineralization. Homotrimer. Binds to PKC beta-1. Interacts with ROBO3.

Its subcellular location is the cytoplasm. It localises to the nucleus envelope. It is found in the secreted. Functionally, plays a role in the control of cell growth and differentiation. Promotes osteoblast cell differentiation and terminal mineralization. This is Protein kinase C-binding protein NELL1 (Nell1) from Rattus norvegicus (Rat).